A 396-amino-acid chain; its full sequence is GDSL esterase/lipase ACHE (396 aa).

An N-terminal signal peptide occupies residues 1–31 (MATAATATAGSRAAVLLLLSLALALALRPSD). Serine 49 (nucleophile) is an active-site residue. 5 N-linked (GlcNAc...) asparagine glycosylation sites follow: asparagine 108, asparagine 126, asparagine 151, asparagine 196, and asparagine 339. Catalysis depends on residues aspartate 359 and histidine 362.

It belongs to the 'GDSL' lipolytic enzyme family.

It is found in the secreted. Esterase that can hydrolyze acetylthiocholine and propionylthiocholine in vitro. Substrate preference is propionylthiocholine &gt; acetylthiocholine. Possesses extremely low activity against butyrylthiocholine. The chain is GDSL esterase/lipase ACHE from Zea mays (Maize).